A 338-amino-acid polypeptide reads, in one-letter code: Phenylalanine--tRNA ligase alpha subunit (338 aa).

Glutamate 259 contacts Mg(2+).

It belongs to the class-II aminoacyl-tRNA synthetase family. Phe-tRNA synthetase alpha subunit type 1 subfamily. Tetramer of two alpha and two beta subunits. The cofactor is Mg(2+).

The protein localises to the cytoplasm. The catalysed reaction is tRNA(Phe) + L-phenylalanine + ATP = L-phenylalanyl-tRNA(Phe) + AMP + diphosphate + H(+). In Herminiimonas arsenicoxydans, this protein is Phenylalanine--tRNA ligase alpha subunit.